The chain runs to 197 residues: Transcription factor FapR (197 aa).

It belongs to the FapR family.

In terms of biological role, transcriptional factor involved in regulation of membrane lipid biosynthesis by repressing genes involved in fatty acid and phospholipid metabolism. This chain is Transcription factor FapR, found in Bacillus anthracis (strain A0248).